We begin with the raw amino-acid sequence, 2718 residues long: E3 SUMO-protein ligase RanBP2 (2718 aa).

Residues 1-100 (MFTTRKEVDA…DPRQSEVVID (100 aa)) are sufficient for interaction with Hsp83. A sufficient for interaction with piwi region spans residues 1–200 (MFTTRKEVDA…EKMKIDQAFN (200 aa)). TPR repeat units follow at residues 26-58 (DIKG…VRDD) and 59-94 (AVGH…DPRQ). Disordered regions lie at residues 796–816 (QQDR…VHNN) and 937–959 (EHQQ…HPVV). A compositionally biased stretch (polar residues) spans 803 to 816 (GIDNSFGSPDVHNN). Residues 808–809 (FG) form repeat 1. Residues 808 to 2581 (FGSPDVHNNS…GEENETKLFG (1774 aa)) are 27 X 2 AA repeats of F-G. Low complexity predominate over residues 938–948 (HQQQQQHQQQQ). 3 repeat units span residues 1028–1029 (FG), 1035–1036 (FG), and 1104–1105 (FG). The interval 1181–1208 (QPVEKEPPANVVITSSDPLPKPTTASVQ) is disordered. Residues 1192–1208 (VITSSDPLPKPTTASVQ) show a composition bias toward polar residues. Repeat unit 5 spans residues 1252-1253 (FG). Disordered stretches follow at residues 1263–1314 (FKTQ…KPII) and 1483–1502 (NKPQ…ATAA). Polar residues predominate over residues 1284–1299 (NQSGATDPNKTLPQDT). The 137-residue stretch at 1309-1445 (DFKPIIPLPD…FTKASEAAKS (137 aa)) folds into the RanBD1 1 domain. The segment covering 1483–1493 (NKPQEQTKTQP) has biased composition (polar residues). A run of 4 repeats spans residues 1506-1507 (FG), 1539-1540 (FG), 1547-1548 (FG), and 1552-1553 (FG). Residues 1605–1742 (QFVPVIALPD…VQKAQQSIGN (138 aa)) enclose the RanBD1 2 domain. The interval 1738–1761 (QSIGNEPKKEEVPSAAGEKEKPIK) is disordered. Positions 1743 to 1760 (EPKKEEVPSAAGEKEKPI) are enriched in basic and acidic residues. Repeat 10 spans residues 1763–1764 (FG). The RanBP2-type 1 zinc finger occupies 1770 to 1799 (KAGSWNCQACYTNNGQDQLYCLACQEPKDA). Repeat copies occupy residues 1826-1827 (FG), 1842-1843 (FG), 1874-1875 (FG), and 1883-1884 (FG). The RanBP2-type 2 zinc finger occupies 1890–1919 (AVGSWSCSACYVNNPGESLYCSACDAPKND). 2 tandem repeats follow at residues 1942 to 1943 (FG) and 1944 to 1945 (FG). 3 disordered regions span residues 1981–2021 (FTFS…TYFS), 2154–2204 (EDSP…THEV), and 2239–2273 (SLSR…KDAG). Residues 2002–2016 (EDEDNDSQEVEEEEN) show a composition bias toward acidic residues. A RanBD1 3 domain is found at 2019–2151 (YFSPVIPLPD…IKNALNETAK (133 aa)). A compositionally biased stretch (polar residues) spans 2161-2175 (SVSQSTEANKPSQKN). The segment covering 2239 to 2257 (SLSRNNSSASEASKTPSSA) has biased composition (low complexity). Repeat copies occupy residues 2260-2261 (FG), 2313-2314 (FG), 2332-2333 (FG), 2352-2353 (FG), 2360-2361 (FG), 2366-2367 (FG), 2393-2394 (FG), 2399-2400 (FG), 2415-2416 (FG), 2421-2422 (FG), and 2580-2581 (FG). The tract at residues 2320-2346 (AEQQKKDSSESVFGGNKADSQSPATQE) is disordered. The 144-residue stretch at 2556–2699 (HYDAIVELPD…VNSCIKRAKA (144 aa)) folds into the RanBD1 4 domain.

It belongs to the RanBP2 E3 ligase family. As to quaternary structure, part of the nuclear pore complex. Forms a complex with Nxt1, sbr/Nxf1 and RanGAP. Interacts (via TPR repeats) with Hsp83; the interaction is required for the nuclear import of the sesquiterpenoid juvenile hormone receptor Met. Interacts (via N-terminus) with piwi. Expressed in both oocytes and nurse cells (at protein level).

The protein localises to the nucleus. It localises to the nuclear pore complex. Its function is as follows. E3 SUMO-protein ligase. Component of the nuclear pore complex (NPC), a complex required for trafficking across the nuclear envelope. Required for nuclear import of nuclear localization signal (NLS)-containing proteins in an importin alpha/importin beta-dependent manner, but also for the nuclear import of specific proteins such as phosphorylated Mad or the sesquiterpenoid juvenile hormone receptor Met as part of the juvenile hormone signal transduction pathway. Plays a role in nuclear mRNA export by recruiting the mRNA transport complex composed of Nxt1 and sbr/Nxf1 to the NPC. Essential during germline development for transposon silencing and piRNA biogenesis probably by regulating piwi localization to the nucleus. During oogenesis, required to form granules that modulate the biogenesis of annulate lamellae containing nuclear pore complex components. In Drosophila melanogaster (Fruit fly), this protein is E3 SUMO-protein ligase RanBP2.